Reading from the N-terminus, the 284-residue chain is Esterase alnB (284 aa).

Active-site charge relay system residues include Ser-93, Asp-226, and His-255.

It belongs to the LovG family.

It participates in polyketide biosynthesis. Functionally, esterase; part of the gene cluster that mediates the biosynthesis of asperlin, a polyketide showing anti-inflammatory, antitumor and antibiotic activities. The first step of the asperlin biosynthesis is the production of the intermediate 2,4,6-octatrienoic acid by the highly redusing polyketide synthase alnA with cleavage of the PKS product by the esterase alnB. 2,4,6-octatrienoic acid is further converted to asperlin via several steps involving the remaining enzymes from the cluster. This Emericella nidulans (strain FGSC A4 / ATCC 38163 / CBS 112.46 / NRRL 194 / M139) (Aspergillus nidulans) protein is Esterase alnB.